A 486-amino-acid polypeptide reads, in one-letter code: tRNA sulfurtransferase (486 aa).

The 107-residue stretch at 60 to 166 folds into the THUMP domain; that stretch reads QKICAMLINI…DNQLFIIIKR (107 aa). ATP is bound by residues 184 to 185, Lys-266, Gly-288, and Gln-297; that span reads LI. A disulfide bridge links Cys-345 with Cys-458. The Rhodanese domain maps to 406-484; the sequence is LDSTDVVLDI…GFSNVKIYRP (79 aa). The Cysteine persulfide intermediate role is filled by Cys-458.

This sequence belongs to the ThiI family.

It is found in the cytoplasm. The catalysed reaction is [ThiI sulfur-carrier protein]-S-sulfanyl-L-cysteine + a uridine in tRNA + 2 reduced [2Fe-2S]-[ferredoxin] + ATP + H(+) = [ThiI sulfur-carrier protein]-L-cysteine + a 4-thiouridine in tRNA + 2 oxidized [2Fe-2S]-[ferredoxin] + AMP + diphosphate. The enzyme catalyses [ThiS sulfur-carrier protein]-C-terminal Gly-Gly-AMP + S-sulfanyl-L-cysteinyl-[cysteine desulfurase] + AH2 = [ThiS sulfur-carrier protein]-C-terminal-Gly-aminoethanethioate + L-cysteinyl-[cysteine desulfurase] + A + AMP + 2 H(+). The protein operates within cofactor biosynthesis; thiamine diphosphate biosynthesis. Catalyzes the ATP-dependent transfer of a sulfur to tRNA to produce 4-thiouridine in position 8 of tRNAs, which functions as a near-UV photosensor. Also catalyzes the transfer of sulfur to the sulfur carrier protein ThiS, forming ThiS-thiocarboxylate. This is a step in the synthesis of thiazole, in the thiamine biosynthesis pathway. The sulfur is donated as persulfide by IscS. The protein is tRNA sulfurtransferase of Blochmanniella pennsylvanica (strain BPEN).